A 1528-amino-acid chain; its full sequence is Multidrug resistance-associated protein 1 (1528 aa).

At 1 to 33 (MALRSFCSADGSDPLWDWNVTWHTSNPDFTKCF) the chain is on the extracellular side. N-linked (GlcNAc...) asparagine glycosylation occurs at N19. A helical membrane pass occupies residues 34–54 (QNTVLTWVPCFYLWSCFPLYF). Over 55–74 (FYLSRHDRGYIQMTHLNKTK) the chain is Cytoplasmic. The helical transmembrane segment at 75-95 (TALGFFLWIICWADLFYSFWE) threads the bilayer. Residues 96–100 (RSQGV) lie on the Extracellular side of the membrane. Residues 101 to 121 (LRAPVLLVSPTLLGITMLLAT) traverse the membrane as a helical segment. Residues 122–133 (FLIQLERRKGVQ) lie on the Cytoplasmic side of the membrane. A helical membrane pass occupies residues 134–154 (SSGIMLTFWLVALLCALAILR). At 155–172 (SKIISALKKDAHVDVFRD) the chain is on the extracellular side. A helical membrane pass occupies residues 173 to 193 (STFYLYFTLVLVQLVLSCFSD). The Cytoplasmic portion of the chain corresponds to 194 to 317 (CSPLFSETVH…KDREPSLFKV (124 aa)). At Y277 the chain carries Phosphotyrosine. S290 is modified (phosphoserine). Residues 318–338 (LYKTFGPYFLMSFLYKALHDL) traverse the membrane as a helical segment. Positions 326–609 (FLMSFLYKAL…LPMVISSIVQ (284 aa)) constitute an ABC transmembrane type-1 1 domain. At 339 to 364 (MMFAGPKILELIINFVNDREAPDWQG) the chain is on the extracellular side. A helical membrane pass occupies residues 365 to 385 (YFYTALLFVSACLQTLALHQY). Over 386 to 441 (FHICFVSGMRIKTAVVGAVYRKALLITNAARKSSTVGEIVNLMSVDAQRFMDLATY) the chain is Cytoplasmic. The chain crosses the membrane as a helical span at residues 442–462 (INMIWSAPLQVILALYFLWLS). The Extracellular segment spans residues 463–465 (LGP). The chain crosses the membrane as a helical span at residues 466 to 486 (SVLAGVAVMILMVPLNAVMAM). Topologically, residues 487–548 (KTKTYQVAHM…VLKKSAYLAA (62 aa)) are cytoplasmic. At K504 the chain carries N6-succinyllysine. A helical membrane pass occupies residues 549–569 (VGTFTWVCTPFLVALSTFAVF). The Extracellular portion of the chain corresponds to 570 to 591 (VTVDERNILDAKKAFVSLALFN). A helical transmembrane segment spans residues 592–612 (ILRFPLNILPMVISSIVQASV). The Cytoplasmic portion of the chain corresponds to 613-963 (SLKRLRIFLS…VQLSVYWNYM (351 aa)). Residues 644 to 868 (ITVKNATFTW…DGAFAEFLRT (225 aa)) enclose the ABC transporter 1 domain. 678 to 685 (GQVGCGKS) is a binding site for ATP. Disordered regions lie at residues 876–895 (LASE…PVEN) and 909–929 (RHLS…SSIA). Phosphoserine is present on residues S878, S882, S912, and S927. A compositionally biased stretch (polar residues) spans 910–929 (HLSNSSSHSGDTSQQHSSIA). Residues 964 to 984 (KAIGLFITFLSIFLFLCNHVS) form a helical membrane-spanning segment. The ABC transmembrane type-1 2 domain maps to 971–1253 (TFLSIFLFLC…LVRMSSEMET (283 aa)). The Extracellular portion of the chain corresponds to 985 to 1022 (ALASNYWLSLWTDDPPVVNGTQANRNFRLSVYGALGIL). Residue N1003 is glycosylated (N-linked (GlcNAc...) asparagine). The helical transmembrane segment at 1023 to 1043 (QGAAIFGYSMAVSIGGIFASR) threads the bilayer. The Cytoplasmic segment spans residues 1044–1086 (RLHLDLLYNVLRSPMSFFERTPSGNLVNRFSKELDTVDSMIPQ). The helical transmembrane segment at 1087 to 1107 (VIKMFMGSLFSVIGAVIIILL) threads the bilayer. A1108 is a topological domain (extracellular). Residues 1109-1129 (TPIAAVIIPPLGLVYFFVQRF) traverse the membrane as a helical segment. Residues 1130-1200 (YVASSRQLKR…VANRWLAVRL (71 aa)) are Cytoplasmic-facing. Residues 1201-1221 (ECVGNCIVLFAALFAVISRHS) traverse the membrane as a helical segment. The Extracellular portion of the chain corresponds to 1222–1223 (LS). The helical transmembrane segment at 1224-1244 (AGLVGLSVSYSLQITAYLNWL) threads the bilayer. Residues 1245–1528 (VRMSSEMETN…YSMAKDAGLV (284 aa)) lie on the Cytoplasmic side of the membrane. Residues 1290–1524 (VEFRDYCLRY…RGIFYSMAKD (235 aa)) form the ABC transporter 2 domain. Residue 1324–1331 (GRTGAGKS) coordinates ATP.

It belongs to the ABC transporter superfamily. ABCC family. Conjugate transporter (TC 3.A.1.208) subfamily.

The protein resides in the cell membrane. It is found in the basolateral cell membrane. The catalysed reaction is ATP + H2O + xenobioticSide 1 = ADP + phosphate + xenobioticSide 2.. It carries out the reaction an S-substituted glutathione(in) + ATP + H2O = an S-substituted glutathione(out) + ADP + phosphate + H(+). It catalyses the reaction leukotriene C4(in) + ATP + H2O = leukotriene C4(out) + ADP + phosphate + H(+). The enzyme catalyses sphing-4-enine 1-phosphate(in) + ATP + H2O = sphing-4-enine 1-phosphate(out) + ADP + phosphate + H(+). The catalysed reaction is 17beta-estradiol 17-O-(beta-D-glucuronate)(in) + ATP + H2O = 17beta-estradiol 17-O-(beta-D-glucuronate)(out) + ADP + phosphate + H(+). It carries out the reaction vincristine(in) + ATP + H2O = vincristine(out) + ADP + phosphate + H(+). It catalyses the reaction daunorubicin(in) + ATP + H2O = daunorubicin(out) + ADP + phosphate + H(+). The enzyme catalyses 2',3'-cGAMP(in) + ATP + H2O = 2',3'-cGAMP(out) + ADP + phosphate + H(+). The catalysed reaction is S-[(2E,6E,10E)-geranylgeranyl]-L-glutathione(in) + ATP + H2O = S-[(2E,6E,10E)-geranylgeranyl]-L-glutathione(out) + ADP + phosphate + H(+). It carries out the reaction prostaglandin A2-S-(R)-glutathione(in) + ATP + H2O = prostaglandin A2-S-(R)-glutathione(out) + ADP + phosphate + H(+). It catalyses the reaction prostaglandin A2-S-(S)-glutathione(in) + ATP + H2O = prostaglandin A2-S-(S)-glutathione(out) + ADP + phosphate + H(+). With respect to regulation, MK 571 inhibits sphingosine 1-phosphate and leukotriene C4 export. Mediates export of organic anions and drugs from the cytoplasm. Mediates ATP-dependent transport of glutathione and glutathione conjugates, leukotriene C4, estradiol-17-beta-o-glucuronide, methotrexate, antiviral drugs and other xenobiotics. Confers resistance to anticancer drugs by decreasing accumulation of drugs in cells, and by mediating ATP- and GSH-dependent drug export. Hydrolyzes ATP with low efficiency. Catalyzes the export of sphingosine 1-phosphate from mast cells independently of their degranulation. Participates in inflammatory response by allowing export of leukotriene C4 from leukotriene C4-synthesizing cells. Mediates ATP-dependent, GSH-independent cyclic GMP-AMP (cGAMP) export. Thus, by limiting intracellular cGAMP concentrations negatively regulates the cGAS-STING pathway. Exports S-geranylgeranyl-glutathione (GGG) in lymphoid cells and stromal compartments of lymphoid organs. ABCC1 (via extracellular transport) with GGT5 (via GGG catabolism) establish GGG gradients within lymphoid tissues to position P2RY8-positive lymphocytes at germinal centers in lymphoid follicles and restrict their chemotactic transmigration from blood vessels to the bone marrow parenchyma. Mediates basolateral export of GSH-conjugated R- and S-prostaglandin A2 diastereomers in polarized epithelial cells. The sequence is that of Multidrug resistance-associated protein 1 from Mus musculus (Mouse).